A 187-amino-acid polypeptide reads, in one-letter code: Ribosome-recycling factor (187 aa).

The protein belongs to the RRF family.

It localises to the cytoplasm. In terms of biological role, responsible for the release of ribosomes from messenger RNA at the termination of protein biosynthesis. May increase the efficiency of translation by recycling ribosomes from one round of translation to another. This Mycoplasmopsis pulmonis (strain UAB CTIP) (Mycoplasma pulmonis) protein is Ribosome-recycling factor.